A 454-amino-acid polypeptide reads, in one-letter code: Metalloprotease MTH_856 (454 aa).

A disordered region spans residues 92 to 115; that stretch reads QVGSGAPSVDKTMVRSSRPPSDVP.

The protein belongs to the peptidase U62 family.

Probable metalloprotease. This Methanothermobacter thermautotrophicus (strain ATCC 29096 / DSM 1053 / JCM 10044 / NBRC 100330 / Delta H) (Methanobacterium thermoautotrophicum) protein is Metalloprotease MTH_856.